Here is a 532-residue protein sequence, read N- to C-terminus: FRIGIDA-like protein 4b (532 aa).

Belongs to the Frigida family. As to expression, expressed in leaves, shoot apex, flowers and during seed development.

This is FRIGIDA-like protein 4b (FRL4B) from Arabidopsis thaliana (Mouse-ear cress).